The following is a 337-amino-acid chain: Ketol-acid reductoisomerase (NADP(+)) (337 aa).

The 181-residue stretch at 2–182 folds into the KARI N-terminal Rossmann domain; it reads AKIFYDNDAD…GATRAGVLLT (181 aa). NADP(+)-binding positions include 25–28, Ser51, Ser53, and 83–86; these read YGSQ and DTSQ. Residue His108 is part of the active site. Gly134 provides a ligand contact to NADP(+). Residues 183–328 form the KARI C-terminal knotted domain; that stretch reads TFAEETETDL…ANLRKMMPFI (146 aa). Residues Asp191, Glu195, Glu227, and Glu231 each contribute to the Mg(2+) site. Substrate is bound at residue Ser252.

The protein belongs to the ketol-acid reductoisomerase family. Mg(2+) serves as cofactor.

The enzyme catalyses (2R)-2,3-dihydroxy-3-methylbutanoate + NADP(+) = (2S)-2-acetolactate + NADPH + H(+). The catalysed reaction is (2R,3R)-2,3-dihydroxy-3-methylpentanoate + NADP(+) = (S)-2-ethyl-2-hydroxy-3-oxobutanoate + NADPH + H(+). It functions in the pathway amino-acid biosynthesis; L-isoleucine biosynthesis; L-isoleucine from 2-oxobutanoate: step 2/4. Its pathway is amino-acid biosynthesis; L-valine biosynthesis; L-valine from pyruvate: step 2/4. Involved in the biosynthesis of branched-chain amino acids (BCAA). Catalyzes an alkyl-migration followed by a ketol-acid reduction of (S)-2-acetolactate (S2AL) to yield (R)-2,3-dihydroxy-isovalerate. In the isomerase reaction, S2AL is rearranged via a Mg-dependent methyl migration to produce 3-hydroxy-3-methyl-2-ketobutyrate (HMKB). In the reductase reaction, this 2-ketoacid undergoes a metal-dependent reduction by NADPH to yield (R)-2,3-dihydroxy-isovalerate. The sequence is that of Ketol-acid reductoisomerase (NADP(+)) from Sorangium cellulosum (strain So ce56) (Polyangium cellulosum (strain So ce56)).